A 388-amino-acid chain; its full sequence is Pentatricopeptide repeat-containing protein 2, mitochondrial (388 aa).

One copy of the PPR repeat lies at 166–200; the sequence is TSFNILMDMLFIKGKYKSALQVLIEMKNQDVKFTK. S382 is modified (phosphoserine).

The protein belongs to the PTCD2 family.

The protein localises to the mitochondrion. In terms of biological role, involved in mitochondrial RNA maturation and mitochondrial respiratory chain function. This Homo sapiens (Human) protein is Pentatricopeptide repeat-containing protein 2, mitochondrial (PTCD2).